Reading from the N-terminus, the 152-residue chain is Transcriptional regulator MraZ (152 aa).

SpoVT-AbrB domains are found at residues 5 to 52 (ATLV…PLPE) and 81 to 124 (ASEC…DEQT).

It belongs to the MraZ family. In terms of assembly, forms oligomers.

The protein localises to the cytoplasm. It localises to the nucleoid. Negatively regulates its own expression and that of the subsequent genes in the proximal part of the division and cell wall (dcw) gene cluster. Acts by binding directly to DNA. May also regulate the expression of genes outside the dcw cluster. This Pectobacterium atrosepticum (strain SCRI 1043 / ATCC BAA-672) (Erwinia carotovora subsp. atroseptica) protein is Transcriptional regulator MraZ.